Consider the following 273-residue polypeptide: Urease accessory protein UreD (273 aa).

The protein belongs to the UreD family. UreD, UreF and UreG form a complex that acts as a GTP-hydrolysis-dependent molecular chaperone, activating the urease apoprotein by helping to assemble the nickel containing metallocenter of UreC. The UreE protein probably delivers the nickel.

The protein localises to the cytoplasm. Required for maturation of urease via the functional incorporation of the urease nickel metallocenter. The protein is Urease accessory protein UreD of Rhizobium leguminosarum bv. viciae.